Reading from the N-terminus, the 588-residue chain is Adenine deaminase (588 aa).

The protein belongs to the metallo-dependent hydrolases superfamily. Adenine deaminase family. In terms of assembly, homodimer. It depends on Mn(2+) as a cofactor.

It catalyses the reaction adenine + H2O + H(+) = hypoxanthine + NH4(+). This Escherichia coli O6:H1 (strain CFT073 / ATCC 700928 / UPEC) protein is Adenine deaminase.